The sequence spans 277 residues: Large ribosomal subunit protein uL2 (277 aa).

2 disordered regions span residues 32-58 (KSLT…RGGG) and 225-277 (VAMN…RRNN).

The protein belongs to the universal ribosomal protein uL2 family. As to quaternary structure, part of the 50S ribosomal subunit. Forms a bridge to the 30S subunit in the 70S ribosome.

In terms of biological role, one of the primary rRNA binding proteins. Required for association of the 30S and 50S subunits to form the 70S ribosome, for tRNA binding and peptide bond formation. It has been suggested to have peptidyltransferase activity; this is somewhat controversial. Makes several contacts with the 16S rRNA in the 70S ribosome. This is Large ribosomal subunit protein uL2 from Borrelia duttonii (strain Ly).